Here is a 297-residue protein sequence, read N- to C-terminus: Mitochondrial glycine transporter (297 aa).

Solcar repeat units lie at residues 5–81, 105–189, and 211–295; these read TGHL…MRTA, LSMY…LKHT, and TSTA…LIKH. 6 helical membrane passes run 8–33, 56–82, 111–136, 164–187, 215–241, and 270–288; these read LIGGFAGGLSSAVALQPLDLLKTRFQ, GTLPSAIRTSVGSALYLSSLNLMRTAL, LVTGAFARGTVGYITMPITIIKVRYE, GFGPTCLRDAPYSGLYVLLYEKLK, INSTSAILSASMATTVTAPFDTIKTRM, and GLSMRLTRKALSAGIAWGI.

The protein belongs to the mitochondrial carrier (TC 2.A.29) family. SLC25A38 subfamily.

It is found in the mitochondrion inner membrane. The enzyme catalyses glycine(in) = glycine(out). Mitochondrial glycine transporter that imports glycine into the mitochondrial matrix. Plays an important role in providing glycine for the first enzymatic step in heme biosynthesis, the condensation of glycine with succinyl-CoA to produce 5-aminolevulinate (ALA) in the mitochondrial matrix. This chain is Mitochondrial glycine transporter, found in Candida glabrata (strain ATCC 2001 / BCRC 20586 / JCM 3761 / NBRC 0622 / NRRL Y-65 / CBS 138) (Yeast).